The primary structure comprises 123 residues: Unknown 12C protein (123 aa).

The first 17 residues, 1 to 17, serve as a signal peptide directing secretion; it reads MMSALFLVLSVSLLVSG.

Contains 6 disulfide bonds. As to expression, expressed in acontia, a specialised envenomation structure laden with batteries of venom-containing nematocysts found only in the superfamily Metridioidea.

The protein localises to the secreted. The protein resides in the nematocyst. Cysteine-rich protein with probable toxin activity. This Calliactis polypus (Hermit crab anemone) protein is Unknown 12C protein.